Consider the following 157-residue polypeptide: UPF0303 protein NT01EI_1570 (157 aa).

Belongs to the UPF0303 family.

This chain is UPF0303 protein NT01EI_1570, found in Edwardsiella ictaluri (strain 93-146).